Reading from the N-terminus, the 341-residue chain is S-adenosylmethionine:tRNA ribosyltransferase-isomerase (341 aa).

Belongs to the QueA family. In terms of assembly, monomer.

Its subcellular location is the cytoplasm. It carries out the reaction 7-aminomethyl-7-carbaguanosine(34) in tRNA + S-adenosyl-L-methionine = epoxyqueuosine(34) in tRNA + adenine + L-methionine + 2 H(+). It functions in the pathway tRNA modification; tRNA-queuosine biosynthesis. Its function is as follows. Transfers and isomerizes the ribose moiety from AdoMet to the 7-aminomethyl group of 7-deazaguanine (preQ1-tRNA) to give epoxyqueuosine (oQ-tRNA). The chain is S-adenosylmethionine:tRNA ribosyltransferase-isomerase from Chlorobium phaeobacteroides (strain DSM 266 / SMG 266 / 2430).